We begin with the raw amino-acid sequence, 429 residues long: Histidinol dehydrogenase (429 aa).

Y130, Q191, and N214 together coordinate NAD(+). Substrate contacts are provided by S237, Q259, and H262. The Zn(2+) site is built by Q259 and H262. Active-site proton acceptor residues include E327 and H328. The substrate site is built by H328, D361, E415, and H420. Residue D361 participates in Zn(2+) binding. Residue H420 coordinates Zn(2+).

Belongs to the histidinol dehydrogenase family. The cofactor is Zn(2+).

It catalyses the reaction L-histidinol + 2 NAD(+) + H2O = L-histidine + 2 NADH + 3 H(+). The protein operates within amino-acid biosynthesis; L-histidine biosynthesis; L-histidine from 5-phospho-alpha-D-ribose 1-diphosphate: step 9/9. Functionally, catalyzes the sequential NAD-dependent oxidations of L-histidinol to L-histidinaldehyde and then to L-histidine. The sequence is that of Histidinol dehydrogenase from Neisseria meningitidis serogroup B (strain ATCC BAA-335 / MC58).